Reading from the N-terminus, the 397-residue chain is Putative protein FAM47D (397 aa).

It belongs to the FAM47 family.

The sequence is that of Putative protein FAM47D (FAM47DP) from Homo sapiens (Human).